The sequence spans 294 residues: Cytidine deaminase (294 aa).

2 consecutive CMP/dCMP-type deaminase domains span residues 48 to 168 and 187 to 294; these read DDDA…FGPT and AETD…RVTF. 89-91 serves as a coordination point for substrate; that stretch reads NME. A Zn(2+)-binding site is contributed by His102. The active-site Proton donor is the Glu104. Zn(2+) contacts are provided by Cys129 and Cys132.

It belongs to the cytidine and deoxycytidylate deaminase family. In terms of assembly, homodimer. The cofactor is Zn(2+).

The enzyme catalyses cytidine + H2O + H(+) = uridine + NH4(+). It catalyses the reaction 2'-deoxycytidine + H2O + H(+) = 2'-deoxyuridine + NH4(+). In terms of biological role, this enzyme scavenges exogenous and endogenous cytidine and 2'-deoxycytidine for UMP synthesis. The polypeptide is Cytidine deaminase (Yersinia pseudotuberculosis serotype O:1b (strain IP 31758)).